Here is a 710-residue protein sequence, read N- to C-terminus: Adenylosuccinate synthetase (710 aa).

Disordered stretches follow at residues 1–51 (MPVR…PVPQ) and 84–111 (DEPP…GRSK). Composition is skewed to polar residues over residues 10–27 (YNNS…STTA) and 101–111 (ANASSSSGRSK). GTP contacts are provided by residues 180 to 186 (GDEGKGK) and 210 to 212 (GHT). Asp-181 serves as the catalytic Proton acceptor. The Mg(2+) site is built by Asp-181 and Gly-210. IMP contacts are provided by residues 181 to 184 (DEGK), 208 to 211 (NAGH), Thr-295, Lys-309, Gln-421, Thr-437, and Lys-567. Catalysis depends on His-211, which acts as the Proton donor. A substrate-binding site is contributed by 563-569 (AVTKKPR). Residues Arg-569 and 697 to 699 (GNG) each bind GTP.

Belongs to the adenylosuccinate synthetase family. As to quaternary structure, homodimer. Requires Mg(2+) as cofactor.

The protein resides in the cytoplasm. It catalyses the reaction IMP + L-aspartate + GTP = N(6)-(1,2-dicarboxyethyl)-AMP + GDP + phosphate + 2 H(+). The protein operates within purine metabolism; AMP biosynthesis via de novo pathway; AMP from IMP: step 1/2. Plays an important role in the salvage pathway for purine nucleotide biosynthesis. Catalyzes the first committed step in the biosynthesis of AMP from IMP. The sequence is that of Adenylosuccinate synthetase from Leishmania infantum.